The following is a 99-amino-acid chain: MRIGVVGDSDVAVGFRLAGLTDVYEVKSPEQASKAIEELDNNAEIGLIITTERIGEGIRETIANAKKVIVEVPDKNGPIVREKDPVKILVRNAVGIDIK.

The protein belongs to the V-ATPase F subunit family. Has multiple subunits with at least A(3), B(3), C, D, E, F, H, I and proteolipid K(x).

It localises to the cell membrane. Component of the A-type ATP synthase that produces ATP from ADP in the presence of a proton gradient across the membrane. The sequence is that of A-type ATP synthase subunit F from Methanococcus vannielii (strain ATCC 35089 / DSM 1224 / JCM 13029 / OCM 148 / SB).